We begin with the raw amino-acid sequence, 216 residues long: Ephrin-A1 (216 aa).

An N-terminal signal peptide occupies residues 1 to 28; it reads MMELYRAAVQLIVGVGLGVGLWLREAQG. The Ephrin RBD domain occupies 29–161; sequence ERHIVFWNSS…RLRVHVSGRT (133 aa). A glycan (N-linked (GlcNAc...) asparagine) is linked at Asn36. A disulfide bond links Cys61 and Cys102. Residues 162–181 are disordered; that stretch reads TPPPVNVHTPRSHIQSDEPE. Ser195 carries GPI-anchor amidated serine lipidation. Positions 196-216 are cleaved as a propeptide — removed in mature form; sequence AAPGTPCTLYGLLLAALLLRL.

Belongs to the ephrin family. Binds to the receptor tyrosine kinases EPHA2, EPHA4, EPHA5, EPHA6 and EPHA7. Also binds with low affinity to EPHA1.

It localises to the membrane. In terms of biological role, cell surface GPI-bound ligand for Eph receptors, a family of receptor tyrosine kinases which are crucial for migration, repulsion and adhesion during neuronal, vascular and epithelial development. Binds promiscuously Eph receptors residing on adjacent cells, leading to contact-dependent bidirectional signaling into neighboring cells. The protein is Ephrin-A1 (efna1) of Xenopus laevis (African clawed frog).